A 514-amino-acid polypeptide reads, in one-letter code: Threonine synthase (514 aa).

Lys-117 bears the N6-(pyridoxal phosphate)lysine mark. Residues Gly-270, Asn-271, Phe-272, and Asp-274 each coordinate pyridoxal 5'-phosphate. Phosphoserine is present on residues Ser-319 and Ser-321. Thr-449 provides a ligand contact to pyridoxal 5'-phosphate.

Belongs to the threonine synthase family. It depends on pyridoxal 5'-phosphate as a cofactor.

It carries out the reaction O-phospho-L-homoserine + H2O = L-threonine + phosphate. It functions in the pathway amino-acid biosynthesis; L-threonine biosynthesis; L-threonine from L-aspartate: step 5/5. Catalyzes the gamma-elimination of phosphate from L-phosphohomoserine and the beta-addition of water to produce L-threonine. This chain is Threonine synthase (thrc), found in Schizosaccharomyces pombe (strain 972 / ATCC 24843) (Fission yeast).